The following is a 187-amino-acid chain: RNA pyrophosphohydrolase (187 aa).

One can recognise a Nudix hydrolase domain in the interval 6–149 (GYRANVGIIL…KRQVYRLALT (144 aa)). Residues 38-59 (GGIKSGETPTQAMYRELAEETG) carry the Nudix box motif.

The protein belongs to the Nudix hydrolase family. RppH subfamily. A divalent metal cation is required as a cofactor.

Its function is as follows. Accelerates the degradation of transcripts by removing pyrophosphate from the 5'-end of triphosphorylated RNA, leading to a more labile monophosphorylated state that can stimulate subsequent ribonuclease cleavage. The sequence is that of RNA pyrophosphohydrolase from Nitrosomonas eutropha (strain DSM 101675 / C91 / Nm57).